The following is a 218-amino-acid chain: Ribonuclease T (218 aa).

One can recognise an Exonuclease domain in the interval 24 to 198 (VIIDVETAGF…YDAERTAELF (175 aa)). Asp-27, Glu-29, His-185, and Asp-190 together coordinate Mg(2+). Catalysis depends on His-185, which acts as the Proton donor/acceptor.

It belongs to the RNase T family. As to quaternary structure, homodimer. It depends on Mg(2+) as a cofactor.

Its function is as follows. Trims short 3' overhangs of a variety of RNA species, leaving a one or two nucleotide 3' overhang. Responsible for the end-turnover of tRNA: specifically removes the terminal AMP residue from uncharged tRNA (tRNA-C-C-A). Also appears to be involved in tRNA biosynthesis. This is Ribonuclease T from Histophilus somni (strain 129Pt) (Haemophilus somnus).